Reading from the N-terminus, the 117-residue chain is NADH dehydrogenase [ubiquinone] 1 beta subcomplex subunit 9 (117 aa).

N-acetylserine is present on Ser2.

The protein belongs to the complex I LYR family. Complex I is composed of at least 49 different subunits. Expressed in roots, stems, flowers, rosette leaves, cauline leaves and siliques, with the highest expression in the stems.

It is found in the mitochondrion inner membrane. Accessory subunit of the mitochondrial membrane respiratory chain NADH dehydrogenase (Complex I), that is believed to be not involved in catalysis. Complex I functions in the transfer of electrons from NADH to the respiratory chain. The immediate electron acceptor for the enzyme is believed to be ubiquinone. Is required for correct plant growth and development. This Arabidopsis thaliana (Mouse-ear cress) protein is NADH dehydrogenase [ubiquinone] 1 beta subcomplex subunit 9 (CIB22).